A 245-amino-acid chain; its full sequence is 2,3-bisphosphoglycerate-dependent phosphoglycerate mutase (245 aa).

Residues 8–15 (RHGQSLWN), 21–22 (TG), Arg60, 87–90 (ERHY), Lys98, 114–115 (RR), and 183–184 (GN) each bind substrate. His9 acts as the Tele-phosphohistidine intermediate in catalysis. Glu87 functions as the Proton donor/acceptor in the catalytic mechanism.

This sequence belongs to the phosphoglycerate mutase family. BPG-dependent PGAM subfamily.

It catalyses the reaction (2R)-2-phosphoglycerate = (2R)-3-phosphoglycerate. It participates in carbohydrate degradation; glycolysis; pyruvate from D-glyceraldehyde 3-phosphate: step 3/5. Catalyzes the interconversion of 2-phosphoglycerate and 3-phosphoglycerate. The sequence is that of 2,3-bisphosphoglycerate-dependent phosphoglycerate mutase from Bacillus cereus (strain ATCC 14579 / DSM 31 / CCUG 7414 / JCM 2152 / NBRC 15305 / NCIMB 9373 / NCTC 2599 / NRRL B-3711).